The sequence spans 396 residues: L-lactate dehydrogenase (396 aa).

In terms of domain architecture, FMN hydroxy acid dehydrogenase spans 1–380 (MIISAASDYR…SGDSLVQELG (380 aa)). Tyr-24 contributes to the substrate binding site. 2 residues coordinate FMN: Ser-106 and Gln-127. Tyr-129 contacts substrate. Thr-155 contacts FMN. Substrate is bound at residue Arg-164. Lys-251 is a binding site for FMN. Catalysis depends on His-275, which acts as the Proton acceptor. Residue Arg-278 participates in substrate binding. Residue 306-330 (DSGIRNGLDVVRMIALGADTVLLGR) participates in FMN binding.

The protein belongs to the FMN-dependent alpha-hydroxy acid dehydrogenase family. It depends on FMN as a cofactor.

It is found in the cell inner membrane. The enzyme catalyses (S)-lactate + A = pyruvate + AH2. In terms of biological role, catalyzes the conversion of L-lactate to pyruvate. Is coupled to the respiratory chain. This Salmonella choleraesuis (strain SC-B67) protein is L-lactate dehydrogenase.